The sequence spans 103 residues: Urease subunit beta (103 aa).

Belongs to the urease beta subunit family. As to quaternary structure, heterotrimer of UreA (gamma), UreB (beta) and UreC (alpha) subunits. Three heterotrimers associate to form the active enzyme.

Its subcellular location is the cytoplasm. The enzyme catalyses urea + 2 H2O + H(+) = hydrogencarbonate + 2 NH4(+). It functions in the pathway nitrogen metabolism; urea degradation; CO(2) and NH(3) from urea (urease route): step 1/1. Ureolysis may allow urea to be employed as a nitrogen source for growth and produces ammonia which may protect from killing at low pH. The polypeptide is Urease subunit beta (Streptococcus salivarius (strain 57.I)).